The sequence spans 358 residues: MQTNGRILVVQPELYATTIGVFENERFLYKQTIQHNEEELSKFTRIMDQVAYRKQTLLHQLDLDGINISKFSAVCGRGGLLQPITGGTYAVNDKMLYDLKTASYGEHVSNLGAVIADSIAKGLNIPAYIVDPPVVDEMQSIARISGIPEIERKSIFHALNHRQAGRLASKRLGKNYNELNLIVIHIARGITIGAHNKGKIIDVTNGLEGEGPFTIDRSGGIPIARFLRYGIDKFDQIEDWEQKLIKQSGLKGYLHTEDPKVIQLNLLKKDPWTMEIMQALAYQIAKEIGSMSTVLHGEVDGIVFTGNVEDDDFVMKEVITRINWIADVMVFPGNNELEAMNEGVLQVIRGEIPVKVYP.

The protein belongs to the acetokinase family.

Its subcellular location is the cytoplasm. It carries out the reaction butanoate + ATP = butanoyl phosphate + ADP. The chain is Probable butyrate kinase from Oceanobacillus iheyensis (strain DSM 14371 / CIP 107618 / JCM 11309 / KCTC 3954 / HTE831).